The following is a 347-amino-acid chain: MTSVERENQVSVLFIGDPHFKVKNYEFIPQFVEKILTILDRNPVDFVVVGGDLLDNHERLDVDPLNQAINFIDQLRTRHPTFVLVGNHDYKNNQQFLTADHWMNALKFWSNVTIVDRVVQHTCNRMKFVLVPYVPPGRFVEAIKTQLEEKELRAVKVVFAHQEFFGCKMGAITSSEGDKWPTDWPLVVSGHIHNKQWPQDNIYYPGSAMQHAFGQSVENTISRLVVRNKEFEYDEINLKMPKLSIKYMTVEDAARGNLRYKNTDRKRYKLVLSGALDEFAGFKKTAVYKQLLEEGFAVSFKIKPSTEVRSVDTLNGSRKFLDILTEKVQTTGDADLESLCKSFLAQG.

Aspartate 52, asparagine 87, and histidine 211 together coordinate a divalent metal cation.

Belongs to the metallophosphoesterase superfamily. IIV-6 244L family.

The polypeptide is Putative phosphoesterase 078R (Invertebrate iridescent virus 3 (IIV-3)).